The sequence spans 865 residues: Prominin-1 (865 aa).

The N-terminal stretch at 1–19 (MALVLGSLLLLGLCGNSFS) is a signal peptide. Residues 20 to 108 (GGQPSSTDAP…GLKIVYYEAG (89 aa)) lie on the Extracellular side of the membrane. A helical transmembrane segment spans residues 109–129 (IILCCVLGLLFIILMPLVGYF). Topologically, residues 130 to 157 (FCMCRCCNKCGGEMHQRQKENGPFLRKC) are cytoplasmic. Residues 158–178 (FAISLLVICIIISIGIFYGFV) traverse the membrane as a helical segment. Over 179–433 (ANHQVRTRIK…LPTLEEYDSY (255 aa)) the chain is Extracellular. Residue N220 is glycosylated (N-linked (GlcNAc...) asparagine). N6-acetyllysine occurs at positions 225, 257, and 264. N-linked (GlcNAc...) asparagine glycans are attached at residues N274, N395, and N414. A helical membrane pass occupies residues 434 to 454 (WWLGGLVICSLLTLIVIFYYL). Residues 455-486 (GLLCGVCGYDRHATPTTRGCVSNTGGVFLMVG) are Cytoplasmic-facing. Residues 487–507 (VGLSFLFCWILMIIVVLTFVF) traverse the membrane as a helical segment. At 508–792 (GANVEKLICE…LCSYIIDPLN (285 aa)) the chain is on the extracellular side. 4 N-linked (GlcNAc...) asparagine glycosylation sites follow: N548, N580, N729, and N730. Residues 793 to 813 (LFWFGIGKATVFLLPALIFAV) traverse the membrane as a helical segment. The Cytoplasmic segment spans residues 814-865 (KLAKYYRRMDSEDVYDDVETIPMKNMENGNNGYHKDHVYGIHNPVMTSPSQH). S863 carries the post-translational modification Phosphoserine.

It belongs to the prominin family. As to quaternary structure, interacts with CDHR1 and with actin filaments. Interacts with NAT8 and NAT8B. Isoform 1 and isoform 2 are glycosylated. Post-translationally, acetylation at Lys-225, Lys-257 and Lys-264 by NAT8 and NAT8B may control PROM1 protein expression and its function in cell apoptosis. As to expression, isoform 1 is selectively expressed on CD34 hematopoietic stem and progenitor cells in adult and fetal bone marrow, fetal liver, cord blood and adult peripheral blood. Isoform 1 is not detected on other blood cells. Isoform 1 is also expressed in a number of non-lymphoid tissues including retina, pancreas, placenta, kidney, liver, lung, brain and heart. Found in saliva within small membrane particles. Isoform 2 is predominantly expressed in fetal liver, skeletal muscle, kidney, and heart as well as adult pancreas, kidney, liver, lung, and placenta. Isoform 2 is highly expressed in fetal liver, low in bone marrow, and barely detectable in peripheral blood. Isoform 2 is expressed on hematopoietic stem cells and in epidermal basal cells (at protein level). Expressed in adult retina by rod and cone photoreceptor cells (at protein level).

It localises to the apical cell membrane. The protein localises to the cell projection. It is found in the microvillus membrane. Its subcellular location is the cilium. The protein resides in the photoreceptor outer segment. It localises to the endoplasmic reticulum. The protein localises to the endoplasmic reticulum-Golgi intermediate compartment. May play a role in cell differentiation, proliferation and apoptosis. Binds cholesterol in cholesterol-containing plasma membrane microdomains and may play a role in the organization of the apical plasma membrane in epithelial cells. During early retinal development acts as a key regulator of disk morphogenesis. Involved in regulation of MAPK and Akt signaling pathways. In neuroblastoma cells suppresses cell differentiation such as neurite outgrowth in a RET-dependent manner. This Homo sapiens (Human) protein is Prominin-1 (PROM1).